A 306-amino-acid polypeptide reads, in one-letter code: tRNA pseudouridine synthase B (306 aa).

Residue aspartate 47 is the Nucleophile of the active site.

It belongs to the pseudouridine synthase TruB family. Type 1 subfamily.

The catalysed reaction is uridine(55) in tRNA = pseudouridine(55) in tRNA. In terms of biological role, responsible for synthesis of pseudouridine from uracil-55 in the psi GC loop of transfer RNAs. This chain is tRNA pseudouridine synthase B, found in Neisseria meningitidis serogroup A / serotype 4A (strain DSM 15465 / Z2491).